Here is a 328-residue protein sequence, read N- to C-terminus: MSEKIRVLLYYKYVSIENAQEYAAKHLEFCKSIGLKGRILIADEGINGTVSGDYETTQKYMDWVHSDERFADLWFKIDEENQQAFRKMFVRYKKEIVHLGLEDNNFDSDINPLETTGEYLNPKQFKEALLDEDTVVLDTRNDYEYDLGHFRGAIRPDIRNFRELPQWVRDNKDKFMEKRVVVYCTGGVRCEKFSGWMVREGFKDVGQLHGGIATYGKDPEVQGELWDGAMYVFDDRISVPINHVNPTVISKDYFDGTPCERYVNCANPFCNKQIFASEENETKYVRGCSPECRAHERNRYVQENGLSRQGWAERLEAIGESLPEFVGA.

In terms of domain architecture, Rhodanese spans 130–224 (LDEDTVVLDT…YGKDPEVQGE (95 aa)). The Cysteine persulfide intermediate role is filled by C184.

Belongs to the TrhO family.

It carries out the reaction uridine(34) in tRNA + AH2 + O2 = 5-hydroxyuridine(34) in tRNA + A + H2O. In terms of biological role, catalyzes oxygen-dependent 5-hydroxyuridine (ho5U) modification at position 34 in tRNAs. This chain is tRNA uridine(34) hydroxylase, found in Streptococcus pyogenes serotype M28 (strain MGAS6180).